The sequence spans 337 residues: Ferredoxin--NADP reductase (337 aa).

Asp33, Gln41, Tyr46, Ala86, Phe120, Asp286, and Thr327 together coordinate FAD.

This sequence belongs to the ferredoxin--NADP reductase type 2 family. In terms of assembly, homodimer. The cofactor is FAD.

The enzyme catalyses 2 reduced [2Fe-2S]-[ferredoxin] + NADP(+) + H(+) = 2 oxidized [2Fe-2S]-[ferredoxin] + NADPH. The chain is Ferredoxin--NADP reductase from Rickettsia canadensis (strain McKiel).